The following is a 297-amino-acid chain: Bifunctional protein FolD (297 aa).

NADP(+)-binding positions include 167-169 (GRS) and Ile-233.

It belongs to the tetrahydrofolate dehydrogenase/cyclohydrolase family. As to quaternary structure, homodimer.

The catalysed reaction is (6R)-5,10-methylene-5,6,7,8-tetrahydrofolate + NADP(+) = (6R)-5,10-methenyltetrahydrofolate + NADPH. It catalyses the reaction (6R)-5,10-methenyltetrahydrofolate + H2O = (6R)-10-formyltetrahydrofolate + H(+). It functions in the pathway one-carbon metabolism; tetrahydrofolate interconversion. Its function is as follows. Catalyzes the oxidation of 5,10-methylenetetrahydrofolate to 5,10-methenyltetrahydrofolate and then the hydrolysis of 5,10-methenyltetrahydrofolate to 10-formyltetrahydrofolate. In Zymomonas mobilis subsp. mobilis (strain ATCC 31821 / ZM4 / CP4), this protein is Bifunctional protein FolD.